Consider the following 587-residue polypeptide: Heavy metal-associated isoprenylated plant protein 33 (587 aa).

The HMA domain occupies 9 to 72 (IQTCVLKVNI…KLLKSGKHAE (64 aa)). A metal cation is bound by residues cysteine 20 and cysteine 23. Disordered regions lie at residues 98 to 146 (QIDH…MVIP), 176 to 261 (LKLP…KPMM), 287 to 449 (AHKN…PMSN), 462 to 504 (PGGG…QQQQ), and 532 to 587 (YARP…CNIM). Composition is skewed to gly residues over residues 104–113 (KGGGGGGGGP) and 121–140 (KIGG…GGGP). The span at 194 to 208 (PMNKNPQMPNNPNQK) shows a compositional bias: low complexity. Residues 215–248 (PDDDDEEDFSDEFDDEFDEDDDEFDDDLEDDEFD) show a composition bias toward acidic residues. Gly residues-rich tracts occupy residues 290-300 (NGGGPGPAGGK), 312-419 (MGGG…GGGP), and 428-445 (GAMG…GGPG). Residues 471 to 483 (SAEAPPGYFQGQV) show a composition bias toward low complexity. Composition is skewed to pro residues over residues 534–547 (RPPP…PQPQ) and 554–565 (YPYPYPYPPQYP). Over residues 578-587 (DENTSSCNIM) the composition is skewed to polar residues. Cysteine methyl ester is present on cysteine 584. Cysteine 584 carries the S-farnesyl cysteine lipid modification. A propeptide spans 585–587 (NIM) (removed in mature form).

It belongs to the HIPP family.

Functionally, heavy-metal-binding protein. The chain is Heavy metal-associated isoprenylated plant protein 33 from Arabidopsis thaliana (Mouse-ear cress).